The primary structure comprises 310 residues: Coproporphyrin III ferrochelatase (310 aa).

Fe-coproporphyrin III is bound by residues Tyr-13, Arg-30, 46 to 47 (RY), Ser-54, and Tyr-125. Residues His-181 and Glu-262 each coordinate Fe(2+).

The protein belongs to the ferrochelatase family.

It localises to the cytoplasm. The catalysed reaction is Fe-coproporphyrin III + 2 H(+) = coproporphyrin III + Fe(2+). It participates in porphyrin-containing compound metabolism; protoheme biosynthesis. Its function is as follows. Involved in coproporphyrin-dependent heme b biosynthesis. Catalyzes the insertion of ferrous iron into coproporphyrin III to form Fe-coproporphyrin III. The protein is Coproporphyrin III ferrochelatase of Halalkalibacterium halodurans (strain ATCC BAA-125 / DSM 18197 / FERM 7344 / JCM 9153 / C-125) (Bacillus halodurans).